A 229-amino-acid chain; its full sequence is 2-C-methyl-D-erythritol 4-phosphate cytidylyltransferase (229 aa).

The protein belongs to the IspD/TarI cytidylyltransferase family. IspD subfamily.

It carries out the reaction 2-C-methyl-D-erythritol 4-phosphate + CTP + H(+) = 4-CDP-2-C-methyl-D-erythritol + diphosphate. The protein operates within isoprenoid biosynthesis; isopentenyl diphosphate biosynthesis via DXP pathway; isopentenyl diphosphate from 1-deoxy-D-xylulose 5-phosphate: step 2/6. Catalyzes the formation of 4-diphosphocytidyl-2-C-methyl-D-erythritol from CTP and 2-C-methyl-D-erythritol 4-phosphate (MEP). The chain is 2-C-methyl-D-erythritol 4-phosphate cytidylyltransferase from Neisseria meningitidis serogroup B (strain ATCC BAA-335 / MC58).